The primary structure comprises 260 residues: MLEILYQDEWLVAVNKPSGWLVHRSWLDRDEKVVVMQTVRDQIGQHVFTAHRLDRPTSGVLLMGLSSEAGRLLAQQFEQHQIQKRYHAIVRGWLMEEAVLDYPLVEELDKIADKFAREDKGPQPAVTHYRGLATVEMPVATGRYPTTRYGLVELEPKTGRKHQLRRHLAHLRHPIIGDSKHGDLRQNRSGAEHFGLQRLMLHASQLSLTHPFTGEPLTIHAGLDDTWMQALSQFGWRGLLPENERVEFSAPSGQDGERSS.

Aspartate 54 is a catalytic residue.

This sequence belongs to the pseudouridine synthase RluA family.

It catalyses the reaction uridine(65) in tRNA = pseudouridine(65) in tRNA. Responsible for synthesis of pseudouridine from uracil-65 in transfer RNAs. The protein is tRNA pseudouridine synthase C (truC) of Escherichia coli O157:H7.